We begin with the raw amino-acid sequence, 146 residues long: Hemoglobin subunit beta-C (146 aa).

In terms of domain architecture, Globin spans 2-146 (EWTDFERATI…VVSSLGRQYH (145 aa)). Residues histidine 63 and histidine 92 each contribute to the heme b site.

This sequence belongs to the globin family. HbC is a heterotetramer of two alpha chains and two beta-C chains. As to expression, red blood cells.

Involved in oxygen transport from gills to the various peripheral tissues. The sequence is that of Hemoglobin subunit beta-C (hbbc) from Trematomus bernacchii (Emerald rockcod).